The primary structure comprises 684 residues: Glycine--tRNA ligase beta subunit (684 aa).

Belongs to the class-II aminoacyl-tRNA synthetase family. As to quaternary structure, tetramer of two alpha and two beta subunits.

Its subcellular location is the cytoplasm. It carries out the reaction tRNA(Gly) + glycine + ATP = glycyl-tRNA(Gly) + AMP + diphosphate. The polypeptide is Glycine--tRNA ligase beta subunit (Pseudomonas fluorescens (strain Pf0-1)).